The primary structure comprises 75 residues: Small ribosomal subunit protein bS18 (75 aa).

It belongs to the bacterial ribosomal protein bS18 family. Part of the 30S ribosomal subunit. Forms a tight heterodimer with protein bS6.

In terms of biological role, binds as a heterodimer with protein bS6 to the central domain of the 16S rRNA, where it helps stabilize the platform of the 30S subunit. The protein is Small ribosomal subunit protein bS18 of Buchnera aphidicola subsp. Baizongia pistaciae (strain Bp).